The following is an 80-amino-acid chain: MENLNMDLLYIAAAMMMGLAAIGASIGIGILGGKFLEGAARQPDLIPVLRTQFFIVMGLVDAIPMIAVGLGLYVMFAVAG.

The next 2 membrane-spanning stretches (helical) occupy residues 11-31 (IAAAMMMGLAAIGASIGIGIL) and 53-73 (FFIVMGLVDAIPMIAVGLGLY).

The protein belongs to the ATPase C chain family. In terms of assembly, F-type ATPases have 2 components, F(1) - the catalytic core - and F(0) - the membrane proton channel. F(1) has five subunits: alpha(3), beta(3), gamma(1), delta(1), epsilon(1). F(0) has three main subunits: a(1), b(2) and c(10-14). The alpha and beta chains form an alternating ring which encloses part of the gamma chain. F(1) is attached to F(0) by a central stalk formed by the gamma and epsilon chains, while a peripheral stalk is formed by the delta and b chains.

It localises to the cell inner membrane. Its function is as follows. F(1)F(0) ATP synthase produces ATP from ADP in the presence of a proton or sodium gradient. F-type ATPases consist of two structural domains, F(1) containing the extramembraneous catalytic core and F(0) containing the membrane proton channel, linked together by a central stalk and a peripheral stalk. During catalysis, ATP synthesis in the catalytic domain of F(1) is coupled via a rotary mechanism of the central stalk subunits to proton translocation. In terms of biological role, key component of the F(0) channel; it plays a direct role in translocation across the membrane. A homomeric c-ring of between 10-14 subunits forms the central stalk rotor element with the F(1) delta and epsilon subunits. In Aeromonas hydrophila subsp. hydrophila (strain ATCC 7966 / DSM 30187 / BCRC 13018 / CCUG 14551 / JCM 1027 / KCTC 2358 / NCIMB 9240 / NCTC 8049), this protein is ATP synthase subunit c.